A 421-amino-acid chain; its full sequence is Non-homologous end-joining factor LIF1 (421 aa).

Residues 1–196 are interaction with NEJ1; it reads MSQLTEFISC…VEQLAREREL (196 aa). The interval 365 to 421 is disordered; the sequence is GIQISAGRSDEDYGDISGSESETDASAGEKKSSNHSEQSGNDREPCLQTESETDIET. The segment covering 391 to 409 has biased composition (basic and acidic residues); the sequence is AGEKKSSNHSEQSGNDREP.

It belongs to the XRCC4-XLF family. XLF subfamily. Interacts with DNL4 (via BRCT domain). Interacts (via N-terminus) with NEJ1 (via C-terminus); the interaction is direct. The DNL4-LIF1 complex interacts with POL4.

It localises to the cytoplasm. Its subcellular location is the nucleus. Its function is as follows. Involved in non-homologous repair of DNA double-strand breaks. Stabilizes DNL4. This is Non-homologous end-joining factor LIF1 (LIF1) from Saccharomyces cerevisiae (strain ATCC 204508 / S288c) (Baker's yeast).